Reading from the N-terminus, the 112-residue chain is UPF0102 protein Pmob_0702 (112 aa).

The protein belongs to the UPF0102 family.

The sequence is that of UPF0102 protein Pmob_0702 from Petrotoga mobilis (strain DSM 10674 / SJ95).